A 406-amino-acid polypeptide reads, in one-letter code: Succinylornithine transaminase (406 aa).

K252 carries the post-translational modification N6-(pyridoxal phosphate)lysine.

Belongs to the class-III pyridoxal-phosphate-dependent aminotransferase family. AstC subfamily. Requires pyridoxal 5'-phosphate as cofactor.

The enzyme catalyses N(2)-succinyl-L-ornithine + 2-oxoglutarate = N-succinyl-L-glutamate 5-semialdehyde + L-glutamate. It participates in amino-acid degradation; L-arginine degradation via AST pathway; L-glutamate and succinate from L-arginine: step 3/5. Catalyzes the transamination of N(2)-succinylornithine and alpha-ketoglutarate into N(2)-succinylglutamate semialdehyde and glutamate. Can also act as an acetylornithine aminotransferase. This is Succinylornithine transaminase from Escherichia coli O127:H6 (strain E2348/69 / EPEC).